A 206-amino-acid polypeptide reads, in one-letter code: Large ribosomal subunit protein uL4 (206 aa).

Residues 45–75 form a disordered region; sequence RQGTHSTKTRGEVRGGGRKPWRQKGTGRARQ. The segment covering 60–71 has biased composition (basic residues); it reads GGRKPWRQKGTG.

The protein belongs to the universal ribosomal protein uL4 family. As to quaternary structure, part of the 50S ribosomal subunit.

Functionally, one of the primary rRNA binding proteins, this protein initially binds near the 5'-end of the 23S rRNA. It is important during the early stages of 50S assembly. It makes multiple contacts with different domains of the 23S rRNA in the assembled 50S subunit and ribosome. Forms part of the polypeptide exit tunnel. The chain is Large ribosomal subunit protein uL4 from Thermoanaerobacter pseudethanolicus (strain ATCC 33223 / 39E) (Clostridium thermohydrosulfuricum).